We begin with the raw amino-acid sequence, 84 residues long: Esculentin-1B (84 aa).

An N-terminal signal peptide occupies residues 1-22; sequence MFTLKKPLLLIVLLGMISLSLC. Residues 23–38 constitute a propeptide that is removed on maturation; that stretch reads EQERNADEEEGSEIKR. An intrachain disulfide couples cysteine 78 to cysteine 84.

It belongs to the frog skin active peptide (FSAP) family. Brevinin subfamily. In terms of tissue distribution, expressed by the skin glands.

Its subcellular location is the secreted. Functionally, shows antibacterial activity against representative Gram-negative and Gram-positive bacterial species, and hemolytic activity. The polypeptide is Esculentin-1B (Pelophylax lessonae (Pool frog)).